Here is a 235-residue protein sequence, read N- to C-terminus: Protein Thf1 (235 aa).

The stretch at 183 to 204 (DKLNKDLELYRSNLDKMAQALV) forms a coiled coil. The segment at 213–235 (DRKKREQRKQQSTAPVAPPSSNE) is disordered. Polar residues predominate over residues 222-235 (QQSTAPVAPPSSNE).

This sequence belongs to the THF1 family.

Its function is as follows. May be involved in photosynthetic membrane biogenesis. The protein is Protein Thf1 of Nostoc punctiforme (strain ATCC 29133 / PCC 73102).